A 492-amino-acid chain; its full sequence is Ribose import ATP-binding protein RbsA (492 aa).

ABC transporter domains lie at 3 to 239 (IDMR…VGRK) and 238 to 492 (RKLE…TGGK). 35 to 42 (GENGAGKS) lines the ATP pocket.

It belongs to the ABC transporter superfamily. Ribose importer (TC 3.A.1.2.1) family. In terms of assembly, the complex is composed of an ATP-binding protein (RbsA), two transmembrane proteins (RbsC) and a solute-binding protein (RbsB).

Its subcellular location is the cell membrane. The catalysed reaction is D-ribose(out) + ATP + H2O = D-ribose(in) + ADP + phosphate + H(+). Part of the ABC transporter complex RbsABC involved in ribose import. Responsible for energy coupling to the transport system. The polypeptide is Ribose import ATP-binding protein RbsA (Streptococcus agalactiae serotype III (strain NEM316)).